The following is a 459-amino-acid chain: Putrescine aminotransferase (459 aa).

Pyridoxal 5'-phosphate contacts are provided by residues G150–T151 and Q274. N6-(pyridoxal phosphate)lysine is present on K300. T332 contacts pyridoxal 5'-phosphate.

Belongs to the class-III pyridoxal-phosphate-dependent aminotransferase family. Putrescine aminotransferase subfamily. It depends on pyridoxal 5'-phosphate as a cofactor.

It catalyses the reaction an alkane-alpha,omega-diamine + 2-oxoglutarate = an omega-aminoaldehyde + L-glutamate. It carries out the reaction putrescine + 2-oxoglutarate = 1-pyrroline + L-glutamate + H2O. The enzyme catalyses cadaverine + 2-oxoglutarate = 5-aminopentanal + L-glutamate. Its pathway is amine and polyamine degradation; putrescine degradation; 4-aminobutanal from putrescine (transaminase route): step 1/1. Functionally, catalyzes the aminotransferase reaction from putrescine to 2-oxoglutarate, leading to glutamate and 4-aminobutanal, which spontaneously cyclizes to form 1-pyrroline. This is the first step in one of two pathways for putrescine degradation, where putrescine is converted into 4-aminobutanoate (gamma-aminobutyrate or GABA) via 4-aminobutanal. Also functions as a cadaverine transaminase in a a L-lysine degradation pathway to succinate that proceeds via cadaverine, glutarate and L-2-hydroxyglutarate. The chain is Putrescine aminotransferase from Enterobacter sp. (strain 638).